A 338-amino-acid polypeptide reads, in one-letter code: MDLAEYKGIYVIAEQFEGKLRDVSFELLGQARILADTIGDEVGAILIGKDVKPLAQELIAHGAHKVYVYDDPQLEHYNTTAYAKVICDFFHEEKPNVFLVGATNIGRDLGPRVANSLKTGLTADCTQLGVDDDKKTIVWTRPALGGNIMAEIICPDNRPQMGTVRPHVFKKPEADPSATGEVIEKKANLSDADFMTKFVELIKLGGEGVKIEDADVIVAGGRGMNSEEPFKTGILKECADVLGGAVGASRAAVDAGWIDALHQVGQTGKTVGPKIYIACAISGAIQPLAGMTGSDCIIAINKDEDAPIFKVCDYGIVGDVFKVLPLLTEAIKKQKGIA.

An FAD-binding site is contributed by 275-303 (IYIACAISGAIQPLAGMTGSDCIIAINKD).

It belongs to the ETF alpha-subunit/FixB family. In terms of assembly, heterodimer of an alpha and a beta subunit. FAD serves as cofactor.

In terms of biological role, the electron transfer flavoprotein serves as a specific electron acceptor for other dehydrogenases. It transfers the electrons to the main respiratory chain via ETF-ubiquinone oxidoreductase (ETF dehydrogenase). This is Electron transfer flavoprotein subunit alpha (etfA) from Megasphaera elsdenii.